We begin with the raw amino-acid sequence, 506 residues long: Anaerobic nitric oxide reductase transcription regulator NorR (506 aa).

Position 57 is a 4-aspartylphosphate (Asp57). Positions 187 to 416 (MIGLSPAMTQ…LEHAIHRAVV (230 aa)) constitute a Sigma-54 factor interaction domain. Residues 215-222 (GETGTGKE) and 278-287 (ADNGTLFLDE) each bind ATP. Residues 481–500 (WAASARALETDVANLHRLAK) constitute a DNA-binding region (H-T-H motif).

The protein operates within nitrogen metabolism; nitric oxide reduction. In terms of biological role, required for the expression of anaerobic nitric oxide (NO) reductase, acts as a transcriptional activator for at least the norVW operon. Activation also requires sigma-54. In Salmonella gallinarum (strain 287/91 / NCTC 13346), this protein is Anaerobic nitric oxide reductase transcription regulator NorR.